The primary structure comprises 500 residues: L-aspartate semialdehyde sulfurtransferase (500 aa).

Catalysis depends on Cys-131, which acts as the Cysteine persulfide intermediate. 2 CBS domains span residues 384–441 (MADF…IFDS) and 446–500 (MTKK…ARRY).

It belongs to the L-aspartate semialdehyde sulfurtransferase family. Forms homodimers. May form a complex with MA_1822.

The catalysed reaction is L-aspartate 4-semialdehyde + reduced 2[4Fe-4S]-[ferredoxin] + hydrogen sulfide + 3 H(+) = oxidized 2[4Fe-4S]-[ferredoxin] + L-homocysteine + H2O. It functions in the pathway amino-acid biosynthesis. In terms of biological role, required for O-acetylhomoserine sulfhydrylase (OAHS)-independent homocysteine (Hcy) biosynthesis. Together with MA_1822, catalyzes the condensation of sulfide with aspartate semialdehyde to generate homocysteine. Likely functions through persulfide intermediate. This chain is L-aspartate semialdehyde sulfurtransferase, found in Methanosarcina acetivorans (strain ATCC 35395 / DSM 2834 / JCM 12185 / C2A).